A 94-amino-acid chain; its full sequence is Small ribosomal subunit protein uS19 (94 aa).

Belongs to the universal ribosomal protein uS19 family.

Protein S19 forms a complex with S13 that binds strongly to the 16S ribosomal RNA. The sequence is that of Small ribosomal subunit protein uS19 from Acidobacterium capsulatum (strain ATCC 51196 / DSM 11244 / BCRC 80197 / JCM 7670 / NBRC 15755 / NCIMB 13165 / 161).